A 2828-amino-acid polypeptide reads, in one-letter code: Matrix-remodeling-associated protein 5 (2828 aa).

A signal peptide spans 1 to 26; it reads MPKRAHWGALSVVLILLWGHPRVALA. In terms of domain architecture, LRRNT spans 27 to 55; the sequence is CPHPCACYVPSEVHCTFRSLASVPAGIAK. LRR repeat units follow at residues 56 to 77, 80 to 101, 104 to 125, 128 to 149, 152 to 173, and 184 to 205; these read HVER…SFAG, KLEL…ALRD, SLQV…TLQG, NLMR…AFNG, SLRL…TFST, and TIRH…MLRN. An LRRCT domain is found at 217–277; it reads NPWTCDCEMR…HKLKDMTCLK (61 aa). N-linked (GlcNAc...) asparagine glycosylation is found at N287 and N321. Ig-like C2-type domains are found at residues 481-571 and 575-669; these read PSGA…YRVL and PSTQ…ITVT. 2 disulfide bridges follow: C501/C555 and C599/C651. N633 is a glycosylation site (N-linked (GlcNAc...) asparagine). 5 disordered regions span residues 671–715, 933–962, 1068–1190, 1204–1275, and 1367–1389; these read KGSG…RRLL, KPTH…EYEP, QGGN…APDI, AWVD…SSET, and EESS…AQPG. Over residues 695-708 the composition is skewed to acidic residues; it reads IVEDEGGSGMGDEE. S702 is a glycosylation site (O-linked (Xyl...) (chondroitin sulfate) serine). The segment covering 951-962 has biased composition (low complexity); sequence SSPEPTSSEYEP. Residues 1090 to 1107 show a composition bias toward polar residues; sequence SKSITLPDSTLGIMSSMS. The segment covering 1146–1168 has biased composition (basic residues); sequence PSRRRPNGRRRLRPNKFRHRHKQ. 2 stretches are compositionally biased toward polar residues: residues 1169-1190 and 1204-1214; these read TPPT…APDI and AWVDNTVNTPK. Basic residues predominate over residues 1229–1243; the sequence is TPRRKHGKRPNKHRY. N-linked (GlcNAc...) asparagine glycosylation is present at N1403. The LRR 7 repeat unit spans residues 1410 to 1434; sequence LKELEDVDFTSEFLSSLTVSTPFHQ. Disordered regions lie at residues 1479–1499, 1536–1566, 1579–1603, 1669–1689, and 1700–1719; these read QNHT…PSTI, NPET…SDQD, QVFG…HASH, STTI…KFTD, and KVFG…KPPS. The span at 1542-1566 shows a compositional bias: polar residues; that stretch reads TPVNNEGTQHMSGPNELSTPSSDQD. N-linked (GlcNAc...) asparagine glycosylation occurs at N1735. Ig-like C2-type domains follow at residues 1853-1946, 1950-2041, 2046-2140, 2146-2239, 2242-2343, 2345-2432, 2440-2534, 2542-2630, 2637-2722, and 2733-2828; these read PQIL…LSVT, PQIL…IRLH, PPVI…LNVQ, ARIT…VDVV, PAKI…KVVT, PATI…KTVW, PKIN…LQLT, PIFH…RLVS, PEAN…PSVT, and PRIT…IHVF. Disulfide bonds link C1875–C1928 and C1972–C2025. N-linked (GlcNAc...) asparagine glycosylation is found at N2007 and N2056. 8 disulfide bridges follow: C2069-C2122, C2168-C2221, C2265-C2324, C2368-C2418, C2466-C2518, C2564-C2616, C2659-C2711, and C2755-C2810. N2693 carries N-linked (GlcNAc...) asparagine glycosylation.

Detected in placenta (at protein level). Detected in cerebrospinal fluid and fibroblasts (at protein level). Highly expressed in kidney, also detected on liver and spleen. Expressed by proximal tubular cells of the kidney (at protein level). Expression highly increases during chronic kidney disease and autosomal dominant polycystic kidney disease, where is detected in cysts.

The protein resides in the secreted. Functionally, in kidney, has anti-inflammatory and anti-fibrotic properties by limiting the induction of chemokines, fibronectin and collagen expression in response to TGB1 and pro-inflammatory stimuli. This Homo sapiens (Human) protein is Matrix-remodeling-associated protein 5 (MXRA5).